Here is a 549-residue protein sequence, read N- to C-terminus: Cytochrome c oxidase subunit 1 (549 aa).

The helical transmembrane segment at 18-38 (LCYLLVAILSGFVGYVYSLFI) threads the bilayer. Residues Glu41 and Gly46 each contribute to the Ca(2+) site. A helical transmembrane segment spans residues 42-62 (LSLIGCGILFGDYQFYNVLIT). A Fe(II)-heme a-binding site is contributed by His64. Transmembrane regions (helical) follow at residues 66–86 (LIMVFAFIMPVMMGGLVNYFI), 100–120 (LNNMSFWMYLAGFGCVVNGFL), 148–168 (FVMFAVHLLGISSILNSINLL), 186–206 (LFIWAALITAILLIITLPVLA), and 222–242 (FYDVVGGGDLILFQHIFWFFG). Cu cation is bound at residue His243. Positions 243-247 (HPEVY) form a cross-link, 1'-histidyl-3'-tyrosine (His-Tyr). The next 2 membrane-spanning stretches (helical) occupy residues 246–266 (VYIILLPVFGLISTIVEVIGF) and 269–289 (VFSTVAMIYSMILIAILGMFV). Tyr247 serves as a coordination point for O2. Cu cation contacts are provided by His292 and His293. 2 helical membrane passes run 306–326 (YFGGVSILIGLPTCVKLFNWI) and 340–360 (VYFVIMFIFMFLIGAVTGLFL). His370 and Asp371 together coordinate Mg(2+). His378 provides a ligand contact to heme a3. 5 consecutive transmembrane segments (helical) span residues 379–399 (FHYVLSLGAVVGFFTGFIHFL), 402–422 (WLPIELYLFWMFYFISTLFIG), 460–480 (MLLLASLILFLCALFCVFLFW), 484–504 (LFFVSLFVFSLYCFFYFSTWL), and 520–540 (IVLDYLFLILCFCFVFFIFFW). His380 provides a ligand contact to Fe(II)-heme a.

The protein belongs to the heme-copper respiratory oxidase family. As to quaternary structure, component of the cytochrome c oxidase (complex IV, CIV), a multisubunit enzyme composed of a catalytic core of 3 subunits and several supernumerary subunits. The complex exists as a monomer or a dimer and forms supercomplexes (SCs) in the inner mitochondrial membrane with ubiquinol-cytochrome c oxidoreductase (cytochrome b-c1 complex, complex III, CIII). The cofactor is heme. It depends on Cu cation as a cofactor.

It localises to the mitochondrion inner membrane. It catalyses the reaction 4 Fe(II)-[cytochrome c] + O2 + 8 H(+)(in) = 4 Fe(III)-[cytochrome c] + 2 H2O + 4 H(+)(out). Its pathway is energy metabolism; oxidative phosphorylation. Functionally, component of the cytochrome c oxidase, the last enzyme in the mitochondrial electron transport chain which drives oxidative phosphorylation. The respiratory chain contains 3 multisubunit complexes succinate dehydrogenase (complex II, CII), ubiquinol-cytochrome c oxidoreductase (cytochrome b-c1 complex, complex III, CIII) and cytochrome c oxidase (complex IV, CIV), that cooperate to transfer electrons derived from NADH and succinate to molecular oxygen, creating an electrochemical gradient over the inner membrane that drives transmembrane transport and the ATP synthase. Cytochrome c oxidase is the component of the respiratory chain that catalyzes the reduction of oxygen to water. Electrons originating from reduced cytochrome c in the intermembrane space (IMS) are transferred via the dinuclear copper A center (CU(A)) of subunit 2 and heme A of subunit 1 to the active site in subunit 1, a binuclear center (BNC) formed by heme A3 and copper B (CU(B)). The BNC reduces molecular oxygen to 2 water molecules using 4 electrons from cytochrome c in the IMS and 4 protons from the mitochondrial matrix. The chain is Cytochrome c oxidase subunit 1 (COI) from Leishmania tarentolae (Sauroleishmania tarentolae).